The primary structure comprises 807 residues: Glycerol-3-phosphate acyltransferase (807 aa).

An HXXXXD motif motif is present at residues 305-310 (CHRSHM).

It belongs to the GPAT/DAPAT family.

Its subcellular location is the cell inner membrane. The catalysed reaction is sn-glycerol 3-phosphate + an acyl-CoA = a 1-acyl-sn-glycero-3-phosphate + CoA. It participates in phospholipid metabolism; CDP-diacylglycerol biosynthesis; CDP-diacylglycerol from sn-glycerol 3-phosphate: step 1/3. The protein is Glycerol-3-phosphate acyltransferase of Klebsiella pneumoniae subsp. pneumoniae (strain ATCC 700721 / MGH 78578).